The chain runs to 656 residues: NADH-ubiquinone oxidoreductase chain 5 (656 aa).

17 consecutive transmembrane segments (helical) span residues 4-21 (TLII…FFGR), 28-50 (AHLI…FFEV), 81-103 (LTVS…SISY), 112-129 (RFFS…ILVT), 133-155 (YLIM…NFWF), 176-198 (TLLT…STVF), 208-230 (IITI…VGLH), 243-262 (VSAL…LLMR), 272-294 (TVLV…IGLF), 301-319 (VIAY…AVGL), 329-351 (LVNH…HAVA), 364-386 (EFLP…VPFM), 409-431 (IVYF…VLYL), 452-471 (LFMT…FGYL), 514-536 (FVFT…KLLI), 603-625 (SLGN…GLIF), and 629-651 (LLYF…FALL).

Belongs to the complex I subunit 5 family.

The protein resides in the mitochondrion inner membrane. The enzyme catalyses a ubiquinone + NADH + 5 H(+)(in) = a ubiquinol + NAD(+) + 4 H(+)(out). Its function is as follows. Core subunit of the mitochondrial membrane respiratory chain NADH dehydrogenase (Complex I) that is believed to belong to the minimal assembly required for catalysis. Complex I functions in the transfer of electrons from NADH to the respiratory chain. The immediate electron acceptor for the enzyme is believed to be ubiquinone. The chain is NADH-ubiquinone oxidoreductase chain 5 (nad5) from Aspergillus niger.